The following is a 1167-amino-acid chain: C5a peptidase (1167 aa).

An N-terminal signal peptide occupies residues 1–31; that stretch reads MRKKQKLPFDKLAIALMSTSILLNAQSDIKA. Residues 34-52 are compositionally biased toward polar residues; that stretch reads VTEDTPVTEQAVETPQPTA. The interval 34 to 73 is disordered; the sequence is VTEDTPVTEQAVETPQPTAVSEEVPSSKETKTPQTPDDAE. The region spanning 99 to 581 is the Peptidase S8 domain; the sequence is KATIRDLNDP…AGAVDAKKAS (483 aa). Catalysis depends on charge relay system residues D130, H193, and S512. The disordered stretch occupies residues 1029-1133; sequence EGHSNKPEQD…RDQLPTTNDK (105 aa). 4 consecutive repeat copies span residues 1034–1050, 1051–1067, 1068–1084, and 1085–1101. The interval 1034-1101 is 4 X 17 AA tandem repeats; that stretch reads KPEQDGSGQT…GQTPGKTPQK (68 aa). 2 stretches are compositionally biased toward basic and acidic residues: residues 1044–1071 and 1078–1090; these read PDKKPEAKPEQDGSDQAPDKKPEAKPEQ and PDKKPETKPEKDS. Composition is skewed to polar residues over residues 1092–1106 and 1120–1130; these read GQTPGKTPQKGQPSR and KASTRDQLPTT. An LPXTG sorting signal motif is present at residues 1127-1131; that stretch reads LPTTN. T1130 bears the Pentaglycyl murein peptidoglycan amidated threonine mark. The propeptide at 1131 to 1167 is removed by sortase; sequence NDKDTNRLHLLKLVMTTFFFGLVAHIFKTKRQKETKK.

This sequence belongs to the peptidase S8 family. Post-translationally, cleaved by SpeB protease; leading to its degradation. Degradation by SpeB is probably strictly regulated to preserve integrity of C5a peptidase.

It is found in the secreted. The protein localises to the cell wall. It carries out the reaction The primary cleavage site is at 67-His-|-Lys-68 in human C5a with a minor secondary cleavage site at 58-Ala-|-Ser-59.. Functionally, this virulence factor of S.pyogenes specifically cleaves the human serum chemotaxin C5a at '68-Lys-|-Asp-69' bond near its C-terminus, destroying its ability to serve as a chemoattractant. The chain is C5a peptidase (scpA) from Streptococcus pyogenes.